A 207-amino-acid chain; its full sequence is MALHMILVMLSLLPLLEAQNPEHVNITIGEPITNETLSWLSDKWFFIGAAVLNPDYRQEIQKMQMVFFNITPNLINDTMELREYHTIDDHCVYNSTHLGIQRENGTLSKYVGGVKIFADLIVLRKHGAFMLAFDLKDEKKRGLSLNAKRPDITPELREVFQKAVKHVGMDESEIIFVDWKKDKCGQQEKKQLELEKETKKDPEEGQA.

An N-terminal signal peptide occupies residues 1-18 (MALHMILVMLSLLPLLEA). Q19 is subject to Pyrrolidone carboxylic acid. N25, N34, N76, N94, and N104 each carry an N-linked (GlcNAc...) asparagine glycan. A disulfide bond links C91 and C184.

The protein belongs to the calycin superfamily. Lipocalin family. As to expression, expressed by the liver and secreted in plasma.

It is found in the secreted. Functionally, functions as a transport protein in the blood stream. Binds various ligands in the interior of its beta-barrel domain. Appears to function in modulating the activity of the immune system during the acute-phase reaction. This is Alpha-1-acid glycoprotein 1 (Orm1) from Mus caroli (Ryukyu mouse).